Consider the following 447-residue polypeptide: Glutamyl-tRNA(Gln) amidotransferase subunit A (447 aa).

Active-site charge relay system residues include Lys50 and Ser125. Ser149 serves as the catalytic Acyl-ester intermediate.

Belongs to the amidase family. GatA subfamily. As to quaternary structure, heterotrimer of A, B and C subunits.

The enzyme catalyses L-glutamyl-tRNA(Gln) + L-glutamine + ATP + H2O = L-glutaminyl-tRNA(Gln) + L-glutamate + ADP + phosphate + H(+). In terms of biological role, allows the formation of correctly charged Gln-tRNA(Gln) through the transamidation of misacylated Glu-tRNA(Gln) in organisms which lack glutaminyl-tRNA synthetase. The reaction takes place in the presence of glutamine and ATP through an activated gamma-phospho-Glu-tRNA(Gln). The polypeptide is Glutamyl-tRNA(Gln) amidotransferase subunit A (Sulfurimonas denitrificans (strain ATCC 33889 / DSM 1251) (Thiomicrospira denitrificans (strain ATCC 33889 / DSM 1251))).